A 389-amino-acid chain; its full sequence is (+)-bicyclogermacrene synthase TS4 (389 aa).

Mg(2+)-binding residues include Asp136, Glu140, His284, Gly288, and Asp292. Residues 136-140 (DEVCE) carry the DDxx(x)D/E motif motif. The NDxxSxxxD/E motif signature appears at 284–292 (HDFIGLQKD).

Belongs to the terpene synthase family.

The catalysed reaction is (2E,6E)-farnesyl diphosphate = bicyclogermacrene + diphosphate. Functionally, catalyzes the cyclization of trans,trans-farnesyl diphosphate (FPP) to the bicyclic sesquiterpene bicyclogermacrene. The sequence is that of (+)-bicyclogermacrene synthase TS4 from Penicillium expansum (Blue mold rot fungus).